The chain runs to 133 residues: Alpha-amylase inhibitor/endochitinase (133 aa).

Residue glutamate 30 is the Proton donor of the active site.

The protein belongs to the glycosyl hydrolase 19 family. Chitinase class I subfamily.

It catalyses the reaction Random endo-hydrolysis of N-acetyl-beta-D-glucosaminide (1-&gt;4)-beta-linkages in chitin and chitodextrins.. This protein functions both as an alpha-amylase inhibitor and as a chitinase. This chain is Alpha-amylase inhibitor/endochitinase, found in Coix lacryma-jobi (Job's tears).